We begin with the raw amino-acid sequence, 297 residues long: uncharacterized protein (297 aa).

Disordered stretches follow at residues 1–20 (MDTLPPATSEESFEIPNADV), 39–100 (IEKD…ENLG), and 174–297 (VQKA…NEDQ). Residues 101–179 (NDLFVSGIAS…RVLNVQKAKR (79 aa)) form the RRM domain. Ser184 carries the post-translational modification Phosphoserine. Composition is skewed to basic and acidic residues over residues 209-223 (GGYRRNNYRDRDSNR) and 233-253 (PQREHSPGNYRKERYNVDSRP). Residues 254 to 263 (RRERHFHGRS) show a composition bias toward basic residues. Positions 287–297 (SHSSVPPNEDQ) are enriched in polar residues.

It is found in the nucleus. This is an uncharacterized protein from Schizosaccharomyces pombe (strain 972 / ATCC 24843) (Fission yeast).